Consider the following 5104-residue polypeptide: MSRFSCIFPTLTDGYVPNPDHTRAAGRRTYTIDLSGWKAPGSEKESHILAAWALVLSSYVGTDEVAFYVVPVTGPDTTALAELKVEGDMSRQSLTCAAEQLLHPALVGAGQVSRETANTIITFANDIESLFVTQTEESFLSLQVYRNEQGHISLSLVYYLSLLTDAQAANVGTAMAQALAEVGTCDNDRLIKDLNLMSPAHLEHIWRFNANVPGIWEECFHDVIERHAVNRPHSLAVDAWDTKLTYADLVREARLLAAYLQQRGVRPGSVVPISFERSGAALVAMLAVSKAGGAFVSVPPNLPAGRLDAILDVIEAPFVVTWTKYESFWAERLPTLPIDNYPKPAADATVEALGKPEDLFYVIFTSGSTGRPKGCMLSHSNWLNGALRNAPSWKYGPQSRVLQMLSHTFDMSLLEICTSLGSGACVCVPRTEEIETSISDAINRWQVNHVIMTPSLARALRPDDVPGLKTMCLGGEAFPKEIVTMWSERINLWQFYGPSECSINSSSRPITRPDADPLNIGPPNSAACWVVDVQDYNKLVPVGAIGELLVSGPIVGMGYLKNPVKTAEAFLDEVEFVAKDDPQFGGFRFYRTGDLVRWNSDGTITFCGRADTQVKLNGQRLELAEVEYQLGLEAGVQYAIAMAPQAGLCKNNLLAILTVKGTSTGNQDTAADEIPLLDRRDPIVQETVKKLRSQLQHALPRYMVPTIWAFVGRLPMSASGKIDRVQLRDWVQKMSQETFDAITGRSLEAEGHVLGLSRLEQEIQLAWAEALGLSAAEVGLQQPFVALGGDSIKALDAVARCRACQIKISMVHILSCEGVREAASLAEVQETPAQQVAEMAVDYSNLWTRLSNDYDLGKLGVTRVDEVEDVFPCTTMQEGMFLGQIRRPGAYHMRFFHRVQLKGGCLPTVERIQQAWASLVERHPSLRTVFVDDLSPEAIYHSIVLRSVPMELRMREVPRDLSAEAALAMFTEELVPFRANAPLHRMLLLTCRGRVPYLMLEISHVIMDGYALSVFRREFIRACSSSPPLPRGPDYRMFANYHRTRQTDESTGYWTNYLADCVPCHIPTHAVSAPSDAPPEWPRTLQRRDFGVDNSAAFLQRCKERQVTLACAIRAAWALVLRAYTQSKDVCFGYVSSGRNVPVPEVEAIFGLCLSMQVCRARLSEASTIASLARRIQEDYVASLPFQHYPLAEAQRGLKQTHGQGLFNTAISMEWVPPSVEDEDALLDLEEIREQDDPTEYDIAISVDVHEGHIKLGFLYWPNLTDFEITHLAEALRGAMNCFAFQPDGALNTLSLLQASDVCSALADGPTLLPLEAVRGNAVSMIDRWVTRQPEGAAIDGWDGSLSYKELHEQSSWVARNLLHQGVQLGDRVLVCADRSSRTVAIVLGIVRAGCVLVLSNPTDPEKRLQWLAKKCDAALVVADPTYEERFATSGSRILSTTSVCAPAAWDYEFPALDEHDLISILFTSGSTGTPKGILMEHGALATSVLLGHGRTLRFSRHTRMLHFASLTFDAALAEIFTTLAHGGCICVPCEEDRLSDVPGCISSFAVNTAMLTPSVGRLLDPGALPTLKTLIMVGEPMSRLDVERFAPVLDLYNGAGPTETSIMVTIAGPMKPTDEPVNLGFAVAGVRLWVTEAENPNRLAPLGAVGELIVEGRLVTRGYLDDPARTQEAFLPTLPWLPSQHALYRTGDLVRYAEDGSLRYMGRKDTQVKLRGQRIELQEVEYHLRKSLQQAQIVVEMVVPAGKMRAQASLVAFVSGLTAADVESSSACNFGGTIPISQIVLSKSTFQALGEVLPRHMIPSVYYALDTIPLSLNGKADRRRLREMGSALLASSAAHKNTIEGMRESVKWTPASELERTLLELWAATLALDAETIHGDDSFFELGGDSVSAMKLVATARDKFKLSLSVPQMFRYPTIRQLAAEFGGPAGQSASSASSTTEERFTFSTPDDSSTNDGVDDDFLQLATAQLAQLAQEKGKKVDIAALLKQLQGGSFTNKTPSVSSSSSSSSSSEKKKKAAKVDSQAEAAAPVPVQFSLLDGGAEFLEKVREQAVEQCKVPHEDIEDIYPATPLQEGMMALTARTPGVYTTTLTCDLSEEVDLARLHYAWGKAAEAHPILRTRLILTDNNTAVQVVQRAEELPWDTYSLHDGDVLPDLTSNMTFGSPLLRLAVVHRQNQPRMLLVAIHHALYDGWSMPLLKQAVEDAYHGRDLRPQPFTPFIEYVIVGKQAAQDFWTTHLDSFAGGVFPNFPSIDYQINPTERRTRSMTLPTVTPRAQYTMATKIQAAWAVTVSRYAEANDIVFGTVSTGRSAPVPAIDRMVGPTITTVPVRISLSNQAERVNSLLQRVQDDSWKKMDHGHLGLQHIRRLGESAAAACSFQTLLVIQPREQPDTKYRSTLLSGLQDVAELKGVDTYPLMLVCEPDGARLHLTAVFDPAVLNGITLERMLAHWELVLIQLWNEPDMAVIELDTVSYSDKEALMRWNTGETIPNGCAHDAVSEWSVRTPHAPAVCAWDGEWTYEELERCSSLIASQILAHGVSSGDFVALYHEKSRWAAAGILAVFKAGAILITLDPAHPTDRIKDILDQARPRLILTSQSLLDVARNFETPLLSVQFAASKPLPEGWSSLPTISSTQAAYTPFTSGSTGRPKGIPLDHRGLAASTASIARSCLLRPASRVLHFASFAFDASMMEHLIAWHAGGCLCIPDDTARQTDLAKCIRGFNVTWAFLTPSCLRLITPDDVPSLQALGLGGESMTSEDITIWGPRLRQIVQLYGPAECCIVAALTPVTKPSENRLIGRPNACRCWVVDSQNLDRMAPIGAVGELVIEGITVGRGYINDPDRTNRAFIRHPKWLQTLYPDDQESKRLYRTGDLVRYAGVDGKLVFIGRRDGQLKLHGQRIELADVEAHLRPLIPGTQKVVVEMVHSADNQNPILAAFLEEMSASQKPTEREVGLLHPSQSQCDQDVKAIDSALSRTVPQYMIPSMYLHISRLPLSASGKLNRRHLREMVAELPRQRLNEYAAGSGLSAPDRPVTSQEREMRAIWARVLSLDPNTIGVNDDFFRIGGDSISGMQVATKCNAAGIHITSADLFRHRNIEQLICHLNTIRTTNCASVSLPTEPVDKWVALAPIQQLFFEVAPEGPNHFNQSLLLHTSRRVSVEELARGLDILVGRHSMLRARFCRKDSGQWFQQVKSLDYEPASGLYRLAAHNQITRESLPTLFTAAQMALSIQDGPLLNVDLVELEDGSQLVYLVAHHLIIDLVSWRILHGELEEYLQTGSLSSATGSVPFLTWSQLQAQYSAEDLTPARALPDFQEANDDFDVTRYWGISSELNTFGQTSISRFTLDRTVTDILFGNANKVMDTRPVEILQAALWYSCNQALTDRPRPSIYVEGHGREPWTDSINVSGTVGWFTTMSPLVSTPWDHLSRKPMRDFVDALSYIKDQRRRIPANGWAYFTSRYLNDEGRIAYGRTKPVVEFLFNYMGQYQEMNRDDAILQLAGDDIQSGTGASDIADNVPRFSLIDVSAFTANGCLTFEFIFPELLQQDARLEQCIKECERTLVAAASSLSEEGPRKTLTDFPLMSALTYDQLSQCLNHALPSIGLRAQDVLNIYPCSPVQQGMLLAQLRDRQAYQQRFRFRIKSQGPTDQLTLKKVKDAWTQVINRHDILRTLLLPVSDHSHFDQVVMVPGSLQHLVRISGTDANPTKDLSHTINITSDSSGTIICEWNVSHALVDAMSIAVIQREVDQELEGALGQHQAPPQYVDYIQWLSLKDNTEAQAYWQRYLKGVEPCLFPKLTSSSEVNPEGTISAIRATWTRDARMDELCHKHAITLTNIFHIVWAVVLGAYVGTDEVCFGYTTLGRDVPVDGVETMVGPLVNVLATTVHLQQDRSILNALLTHQSHLTNSLQHQHHALADVYSSLGLVGSQLFNTIVSLQDMSHFDAPDEQRTRLEMLPANDVSEYNVTLNIGVDQSSIQLVCSYQSASLSAEHANALLRTASHVLREILRDPTQEFCELEVISPECKEQLVKWNAGMLAPTDEYIHEKIQGQCRIHSSREAVCAWDGTFTYAEIDYLSSRLAARLISMGVTSEDIIPIYSPKSRWTVIAILGVLKTGAAFMLLETSHPVARLQAICDQVKTDMIITPASHAVSAANLAPILVVLDNITSSTQEKSDPLPAVGIPPAGEALAYLIFTSGSTGNPKGVMITHENLCSNASIITTSVNMTSDSRVLQFASHAFDGCILELLGALIAGACLIIPSESENKEDLAGCIERMDVTWALLTPSVARILKPETLPRLSNLVLGGEPIAASDLDMWRGHVQVVCAYGPTETTIVASTTSPSTFPADGKDIGLPNGSSLWIVDRWNYHKLSPLGATGELLIEGPNVSQGYLGDPEKTSNAFPDAPRWLSRLRKSPTRLYRTGDLARFDTSTGTIRFVGRKDNQIKFHGQRIELGEIEHHAQLAFSSASTVIVDLITPEQPQQPYIVAFVHQPDANTEATGTIDTILLPPSESFRADALAAQNKMHKRLPHYMVPAVFLPLHRLPLSATGKADRKRLRQCALALSSSELSAYRATASTKRMPSTAAERKMQDLVATVLGRGPAEIGMDDSFFYLGGDSVQAMRLVAEGRQQGLALSLRAIFDSPCLGDLSDQARSLIEDNQRISTASSAGLRDNCDQIDKIVATNSLNKTDVADVLPTTSFQRHWLDGQLKSYIVVDIPGPIDPARLFRAMHRVVEAHPILRVLFVPYETTTLQVILRTAAAIINADLSTTTVEDICRQDADAQVAPGVPYLRVILATQGQADHKIIMRLSHAQYDAVSLSLLMKDLSHAYANDTHPLPSSQFPRFNDYITYQQAQRADPMATTFWRNLLQDVPLTYLNLQPAEPSTSNGTPITLTRDIYIAAFPSLPNGITTATAVKAAWSLVLAQKSDSAAVIFGQVVHGRAIALPGVEGIVGPCANITPVVARLGLQTTGLDLMQSLQDQHRSAMPYEMVDLDDALAYTKKSEAGRKGLQTIVQHQNNVMVDDMEFSLGEVKCGVDVRAVDHVPKEVWVYSSVNEKRPGMLEVKIMSSTLVIGEEVAEELIGLLVEKIMGLLRHPEGVCLNGPC.

Residues 225–616 form an adenylation 1 region; the sequence is ERHAVNRPHS…CGRADTQVKL (392 aa). One can recognise a Carrier 1 domain in the interval 757–830; sequence SRLEQEIQLA…EAASLAEVQE (74 aa). At S791 the chain carries O-(pantetheine 4'-phosphoryl)serine. Residues 868-1299 form a condensation 1 region; the sequence is EDVFPCTTMQ…ALNTLSLLQA (432 aa). An adenylation 2 region spans residues 1327-1716; sequence DRWVTRQPEG…GRKDTQVKLR (390 aa). Residues 1854-1931 enclose the Carrier 2 domain; the sequence is TPASELERTL…QLAAEFGGPA (78 aa). Residue S1891 is modified to O-(pantetheine 4'-phosphoryl)serine. Disordered regions lie at residues 1928-1961 and 1998-2025; these read GGPAGQSASSASSTTEERFTFSTPDDSSTNDGVD and TNKTPSVSSSSSSSSSSEKKKKAAKVDS. Low complexity-rich tracts occupy residues 1934-1958 and 2003-2013; these read SASSASSTTEERFTFSTPDDSSTND and SVSSSSSSSSS. Positions 2066–2481 are condensation 2; that stretch reads EDIYPATPLQ…TVSYSDKEAL (416 aa). The segment at 2504-2896 is adenylation 3; sequence VRTPHAPAVC…IGRRDGQLKL (393 aa). The Carrier 3 domain occupies 3032-3108; that stretch reads RPVTSQEREM…QLICHLNTIR (77 aa). S3069 bears the O-(pantetheine 4'-phosphoryl)serine mark. Condensation regions lie at residues 3125–3590 and 3611–4029; these read WVAL…TYDQ and NIYP…EQLV. The interval 4054-4444 is adenylation 4; that stretch reads HSSREAVCAW…VGRKDNQIKF (391 aa). The 77-residue stretch at 4578-4654 folds into the Carrier 4 domain; that stretch reads MPSTAAERKM…DLSDQARSLI (77 aa). S4615 carries the post-translational modification O-(pantetheine 4'-phosphoryl)serine. The segment at 4691–5018 is condensation 5; sequence DVLPTTSFQR…LQTIVQHQNN (328 aa).

It belongs to the NRP synthetase family.

Its pathway is secondary metabolite biosynthesis. Nonribosomal peptide synthetase; part of the gene cluster that mediates the biosynthesis of malformins, cyclic pentapeptides with a disulfide bond between 2 consecutive cysteins, that show potential anti-tumor as well as antimalarial and antitrypanosomal properties. The nonribosomal peptide synthetase mlfA is responsible of the formation of the cyclic pentapeptide. The malformin biosynthesis clusters in malformin-producing fungi also contain enzymes involved in the formation of the disulfide bond between the two consecutive cysteins within malformins, in addition to additional tailoring enzymes such as methyltransferases or oxidoreductases. They are also composed of up to 4 major facilitator superfamily transporters, and transcription factors probably involved in the regulation of the expression of those clusters. This chain is Malformin synthetase mlfA, found in Aspergillus vadensis (strain CBS 113365 / IMI 142717 / IBT 24658).